A 158-amino-acid chain; its full sequence is Lipoprotein signal peptidase (158 aa).

Helical transmembrane passes span 12–32 (LFWW…AWIV), 46–66 (IIPG…FSLF), and 71–91 (IWLR…AILG). Residues aspartate 124 and aspartate 140 contribute to the active site. Residues 135 to 155 (VFNVADIAINIGIVCLLWSAW) traverse the membrane as a helical segment.

The protein belongs to the peptidase A8 family.

It localises to the cell inner membrane. It carries out the reaction Release of signal peptides from bacterial membrane prolipoproteins. Hydrolyzes -Xaa-Yaa-Zaa-|-(S,diacylglyceryl)Cys-, in which Xaa is hydrophobic (preferably Leu), and Yaa (Ala or Ser) and Zaa (Gly or Ala) have small, neutral side chains.. The protein operates within protein modification; lipoprotein biosynthesis (signal peptide cleavage). Functionally, this protein specifically catalyzes the removal of signal peptides from prolipoproteins. The protein is Lipoprotein signal peptidase of Thermosynechococcus vestitus (strain NIES-2133 / IAM M-273 / BP-1).